Consider the following 390-residue polypeptide: Homeobox protein Meis1 (390 aa).

Positions Gly108–Asp191 constitute an MEIS N-terminal domain. Positions Asp188–Thr202 are enriched in basic and acidic residues. Positions Asp188–Phe279 are disordered. A DNA-binding region (homeobox; TALE-type) is located at residues Arg272–Met334. The interval Tyr299–Arg329 is interaction with DNA.

This sequence belongs to the TALE/MEIS homeobox family. As to quaternary structure, interacts with pbx1 isoform b. In the embryo, displays a broad expression pattern with high levels observed in tissues of neural cell fate such as midbrain, hindbrain, dorsal portion of the neural tube, and neural crest-derived branchial arches. Widely expressed in the adult with highest levels in brain and spleen.

The protein localises to the cytoplasm. It is found in the nucleus. In terms of biological role, induces expression of a number of neural crest marker genes as part of a heterodimer with isoform b of pbx1, to specify neural crest cell fate. Binds to a highly conserved region in the promoter of the neural crest marker gene zic3. The polypeptide is Homeobox protein Meis1 (meis1) (Xenopus laevis (African clawed frog)).